The following is a 194-amino-acid chain: Peptidyl-tRNA hydrolase (194 aa).

Tyr16 is a tRNA binding site. His21 acts as the Proton acceptor in catalysis. TRNA-binding residues include Phe67, Asn69, and Asn115.

The protein belongs to the PTH family. In terms of assembly, monomer.

It localises to the cytoplasm. It carries out the reaction an N-acyl-L-alpha-aminoacyl-tRNA + H2O = an N-acyl-L-amino acid + a tRNA + H(+). Its function is as follows. Hydrolyzes ribosome-free peptidyl-tRNAs (with 1 or more amino acids incorporated), which drop off the ribosome during protein synthesis, or as a result of ribosome stalling. Functionally, catalyzes the release of premature peptidyl moieties from peptidyl-tRNA molecules trapped in stalled 50S ribosomal subunits, and thus maintains levels of free tRNAs and 50S ribosomes. The chain is Peptidyl-tRNA hydrolase from Salmonella agona (strain SL483).